A 279-amino-acid polypeptide reads, in one-letter code: 2-dehydro-3-deoxyphosphooctonate aldolase (279 aa).

It belongs to the KdsA family.

The protein localises to the cytoplasm. It catalyses the reaction D-arabinose 5-phosphate + phosphoenolpyruvate + H2O = 3-deoxy-alpha-D-manno-2-octulosonate-8-phosphate + phosphate. Its pathway is carbohydrate biosynthesis; 3-deoxy-D-manno-octulosonate biosynthesis; 3-deoxy-D-manno-octulosonate from D-ribulose 5-phosphate: step 2/3. It functions in the pathway bacterial outer membrane biogenesis; lipopolysaccharide biosynthesis. In Aromatoleum aromaticum (strain DSM 19018 / LMG 30748 / EbN1) (Azoarcus sp. (strain EbN1)), this protein is 2-dehydro-3-deoxyphosphooctonate aldolase.